Consider the following 88-residue polypeptide: Small ribosomal subunit protein bS16 (88 aa).

Belongs to the bacterial ribosomal protein bS16 family.

This is Small ribosomal subunit protein bS16 from Buchnera aphidicola subsp. Cinara cedri (strain Cc).